The chain runs to 262 residues: Thiazole synthase (262 aa).

The active-site Schiff-base intermediate with DXP is the Lys97. 1-deoxy-D-xylulose 5-phosphate-binding positions include Gly158, 185–186 (AG), and 207–208 (NT).

The protein belongs to the ThiG family. In terms of assembly, homotetramer. Forms heterodimers with either ThiH or ThiS.

It localises to the cytoplasm. The enzyme catalyses [ThiS sulfur-carrier protein]-C-terminal-Gly-aminoethanethioate + 2-iminoacetate + 1-deoxy-D-xylulose 5-phosphate = [ThiS sulfur-carrier protein]-C-terminal Gly-Gly + 2-[(2R,5Z)-2-carboxy-4-methylthiazol-5(2H)-ylidene]ethyl phosphate + 2 H2O + H(+). It functions in the pathway cofactor biosynthesis; thiamine diphosphate biosynthesis. Catalyzes the rearrangement of 1-deoxy-D-xylulose 5-phosphate (DXP) to produce the thiazole phosphate moiety of thiamine. Sulfur is provided by the thiocarboxylate moiety of the carrier protein ThiS. In vitro, sulfur can be provided by H(2)S. The sequence is that of Thiazole synthase from Neisseria gonorrhoeae (strain ATCC 700825 / FA 1090).